A 554-amino-acid polypeptide reads, in one-letter code: MKQRLRQYIGEALQACFDQQQLHSGTIPEINLEVPAHAEHGDFSTNVAMAMARAEKKAPRKIAETIVAALGEGGGMWSRVEIAGPGFINFYLTPRCWFGVLDEVVRRGDLFGRTHTGNGRKVQVEFVSANPTGPLHIGHGRGAATGDAVAAVLGAAGYEVQREYYINDAGNQMLTLGRSLLLRYRELLGETIEFPTDCYQGVYVIDLAREVLESEGERLRDLPEEEALRFFANYGGDKIRAGIDEDLAAFGVRFDNWYSEQSLYDRQEVERGIALLKERGLTYEKDGAIWFRTTDYGDDKDRVLIRSNGATTYFASDVAYHKEKFERGFDTVIDVWGADHHGYVPRMKAVLAGLDRNPEDLQIILVQLVNLLRGGQQVAMSTRSGEFVTLREVIDEVGRDACRFFFLMRRSDSQLDFDLDLAKKQSTENPVYYVQYAHARVCSINRNAEDQGVAMPELGEVDFDCLTLEDELALTKLLSRYPEVVDGAAEHFEPHRVVFYLQELAARFHSYYNKGRVLVDDPDVSRARLYLVNCVRTVLHNALVLLGVSAPERM.

A 'HIGH' region motif is present at residues 129 to 139 (ANPTGPLHIGH).

The protein belongs to the class-I aminoacyl-tRNA synthetase family. In terms of assembly, monomer.

Its subcellular location is the cytoplasm. It catalyses the reaction tRNA(Arg) + L-arginine + ATP = L-arginyl-tRNA(Arg) + AMP + diphosphate. In Syntrophotalea carbinolica (strain DSM 2380 / NBRC 103641 / GraBd1) (Pelobacter carbinolicus), this protein is Arginine--tRNA ligase.